We begin with the raw amino-acid sequence, 274 residues long: Diaminopimelate epimerase (274 aa).

Substrate-binding residues include asparagine 11, glutamine 44, and asparagine 64. Catalysis depends on cysteine 73, which acts as the Proton donor. Residues 74–75, asparagine 157, asparagine 190, and 208–209 contribute to the substrate site; these read GN and ER. Residue cysteine 217 is the Proton acceptor of the active site. A substrate-binding site is contributed by 218–219; sequence GS.

This sequence belongs to the diaminopimelate epimerase family. As to quaternary structure, homodimer.

It is found in the cytoplasm. The catalysed reaction is (2S,6S)-2,6-diaminopimelate = meso-2,6-diaminopimelate. The protein operates within amino-acid biosynthesis; L-lysine biosynthesis via DAP pathway; DL-2,6-diaminopimelate from LL-2,6-diaminopimelate: step 1/1. In terms of biological role, catalyzes the stereoinversion of LL-2,6-diaminopimelate (L,L-DAP) to meso-diaminopimelate (meso-DAP), a precursor of L-lysine and an essential component of the bacterial peptidoglycan. In Haemophilus influenzae (strain PittEE), this protein is Diaminopimelate epimerase.